The sequence spans 258 residues: MHDWDPALYQRFESERTRPAVELLARVSHPAPRHIVDLGCGNGNSTQLLLERFPQSQLIGLDNSEAMLASARKRLPGVPFVQADIADWAPTVAPDLIFANASLQWVAGHAGLFARLMRCLAPGGVLAVQMPDNLDQPSHQLMRELASQSAWRDQLAHAADQRAALLSVEAYYDLLAPMACRVDIWHTAYRHVMPSVQAIVEWLESTGLKPFLDPLSAVLRDAYLQAYTQRIGEAYTKRADGHRLFAFPRLFIVAQRAP.

This sequence belongs to the methyltransferase superfamily. Tam family.

It localises to the cytoplasm. It catalyses the reaction trans-aconitate + S-adenosyl-L-methionine = (E)-3-(methoxycarbonyl)pent-2-enedioate + S-adenosyl-L-homocysteine. Functionally, catalyzes the S-adenosylmethionine monomethyl esterification of trans-aconitate. This chain is Trans-aconitate 2-methyltransferase, found in Acidovorax ebreus (strain TPSY) (Diaphorobacter sp. (strain TPSY)).